We begin with the raw amino-acid sequence, 304 residues long: UTP--glucose-1-phosphate uridylyltransferase 1 (304 aa).

This sequence belongs to the UDPGP type 2 family.

It catalyses the reaction alpha-D-glucose 1-phosphate + UTP + H(+) = UDP-alpha-D-glucose + diphosphate. The protein operates within carbohydrate metabolism; nucleotide-sugar metabolism. This Streptococcus pyogenes serotype M1 protein is UTP--glucose-1-phosphate uridylyltransferase 1 (hasC1).